A 141-amino-acid chain; its full sequence is Hemoglobin subunit alpha-D/D' (141 aa).

The Globin domain occupies 1 to 141 (MLTADDKKLI…VAAVLAEKYR (141 aa)). The heme b site is built by His58 and His87.

This sequence belongs to the globin family. Heterotetramer of two alpha-D chains and two beta chains. Red blood cells.

Functionally, involved in oxygen transport from the lung to the various peripheral tissues. The polypeptide is Hemoglobin subunit alpha-D/D' (HBAD) (Gyps rueppelli (Rueppell's griffon)).